A 431-amino-acid polypeptide reads, in one-letter code: MKNTYTSGELEQFFSSDLSSTDGAVQVAIDLEEARQNQQIELIASENIVSKAVMEAQGTVLTNKYAEGYPGRRYYGGCEHVDLVETLAIDRAKLIFKADFVNVQPHSGAQANGAVMLALVKPGDTILGMSLDAGGHLTHGAKPAQSGKWFNAIHYGVRKDDMRIDYDQVLALAIEHQPKMIIAGGSAIPRQIDFAKFREIADQVGAILMVDMAHIAGLVAAGAHQNPLPFADVVTTTTHKTLRGPRGGLILTNNPDVAKKINSAVFPGLQGGPLMHVIAAKAVALGEVLEPSFGAYIKQVLSNARVLASTLQQRGCDIVTDGTDTHLMLVDLRPKGLKGNTTEESLERAGITCNKNGIPFDSEKPMVTSGIRLGTPAGTSRGFGNDEFELIGQWIGDVLDGLVANPEDNSVAEQKVLQQVQQLCLRFPLYS.

Residues leucine 131 and glycine 135–leucine 137 each bind (6S)-5,6,7,8-tetrahydrofolate. Position 240 is an N6-(pyridoxal phosphate)lysine (lysine 240).

Belongs to the SHMT family. As to quaternary structure, homodimer. Requires pyridoxal 5'-phosphate as cofactor.

The protein localises to the cytoplasm. It catalyses the reaction (6R)-5,10-methylene-5,6,7,8-tetrahydrofolate + glycine + H2O = (6S)-5,6,7,8-tetrahydrofolate + L-serine. Its pathway is one-carbon metabolism; tetrahydrofolate interconversion. It functions in the pathway amino-acid biosynthesis; glycine biosynthesis; glycine from L-serine: step 1/1. Its function is as follows. Catalyzes the reversible interconversion of serine and glycine with tetrahydrofolate (THF) serving as the one-carbon carrier. This reaction serves as the major source of one-carbon groups required for the biosynthesis of purines, thymidylate, methionine, and other important biomolecules. Also exhibits THF-independent aldolase activity toward beta-hydroxyamino acids, producing glycine and aldehydes, via a retro-aldol mechanism. This is Serine hydroxymethyltransferase 3 from Colwellia psychrerythraea (strain 34H / ATCC BAA-681) (Vibrio psychroerythus).